Consider the following 121-residue polypeptide: Amelogenin (121 aa).

The interval 1-121 (LHHQIIPVLS…DLPLEPWPAS (121 aa)) is disordered. Polar residues-rich tracts occupy residues 10–19 (SQHQTPTHAL) and 47–59 (HSVT…QSNL). Positions 60–84 (PQPGQQPFQPQFPQKPTHRPIQPQA) are enriched in low complexity. Pro residues predominate over residues 85–121 (PVHPMPPMPQPQLPPMFPLQPLPPLLPDLPLEPWPAS).

This sequence belongs to the amelogenin family.

The protein localises to the secreted. The protein resides in the extracellular space. Its subcellular location is the extracellular matrix. In terms of biological role, plays a role in the biomineralization of teeth. Seems to regulate the formation of crystallites during the secretory stage of tooth enamel development. Thought to play a major role in the structural organization and mineralization of developing enamel. This is Amelogenin (AMEL) from Tachyglossus aculeatus aculeatus (Southeast Australian short-beaked echidna).